Here is a 456-residue protein sequence, read N- to C-terminus: Signal transduction histidine-protein kinase ArlS (456 aa).

2 helical membrane-spanning segments follow: residues L13 to F33 and I157 to F177. An HAMP domain is found at S179–N232. The Histidine kinase domain maps to D240–N456. H243 carries the phosphohistidine; by autocatalysis modification.

Autophosphorylated.

The protein resides in the cell membrane. The catalysed reaction is ATP + protein L-histidine = ADP + protein N-phospho-L-histidine.. Its function is as follows. Member of the two-component regulatory system ArlS/ArlR. ArlS probably functions as a sensor protein kinase which is autophosphorylated at a histidine residue and transfers its phosphate group to ArlR. The protein is Signal transduction histidine-protein kinase ArlS (arlS) of Staphylococcus epidermidis (strain ATCC 35984 / DSM 28319 / BCRC 17069 / CCUG 31568 / BM 3577 / RP62A).